Here is a 134-residue protein sequence, read N- to C-terminus: uncharacterized protein (134 aa).

Helical transmembrane passes span 16–36 and 43–63; these read IFSF…NTKL and IAYF…IHGT.

The protein belongs to the plectrovirus ORF5 family.

It is found in the host membrane. This is an uncharacterized protein from Spiroplasma citri (SpV1).